We begin with the raw amino-acid sequence, 35 residues long: Photosystem II reaction center protein T (35 aa).

A helical transmembrane segment spans residues 3–23 (ALVYTFLLVSTLGIIFFAIFF).

Belongs to the PsbT family. PSII is composed of 1 copy each of membrane proteins PsbA, PsbB, PsbC, PsbD, PsbE, PsbF, PsbH, PsbI, PsbJ, PsbK, PsbL, PsbM, PsbT, PsbY, PsbZ, Psb30/Ycf12, at least 3 peripheral proteins of the oxygen-evolving complex and a large number of cofactors. It forms dimeric complexes.

It is found in the plastid. The protein localises to the chloroplast thylakoid membrane. In terms of biological role, found at the monomer-monomer interface of the photosystem II (PS II) dimer, plays a role in assembly and dimerization of PSII. PSII is a light-driven water plastoquinone oxidoreductase, using light energy to abstract electrons from H(2)O, generating a proton gradient subsequently used for ATP formation. This chain is Photosystem II reaction center protein T, found in Bassia hyssopifolia (Fivehorn smotherweed).